A 463-amino-acid chain; its full sequence is GTPase Der (463 aa).

EngA-type G domains lie at 2 to 164 and 198 to 369; these read KKII…PKSK and IKIG…KNYT. Residues 8–15, 55–59, 116–119, 204–211, 251–255, and 315–318 each bind GTP; these read GRPNVGKS, DSGGL, NKVD, GRVNVGKS, DTAGI, and NKWD. Residues 370 to 454 form the KH-like domain; that stretch reads QKMKTSRLNE…PVILIPKNRS (85 aa).

This sequence belongs to the TRAFAC class TrmE-Era-EngA-EngB-Septin-like GTPase superfamily. EngA (Der) GTPase family. As to quaternary structure, associates with the 50S ribosomal subunit.

Its function is as follows. GTPase that plays an essential role in the late steps of ribosome biogenesis. This is GTPase Der from Campylobacter fetus subsp. fetus (strain 82-40).